A 317-amino-acid chain; its full sequence is Transmembrane and death domain protein 1 (317 aa).

The first 27 residues, 1–27 (MAARTLASALVLTLWVWALAPAGAVDA), serve as a signal peptide directing secretion. The Extracellular portion of the chain corresponds to 28-218 (MGPHAAVRLA…ERSPMGWAGP (191 aa)). Residues 62-73 (ELSRLSEDRLAR) are compositionally biased toward basic and acidic residues. Residues 62–106 (ELSRLSEDRLARPEPLNTTSGSPSRRRRREAAEDPAGRVAGPGEV) are disordered. The 85-residue stretch at 66–150 (LSEDRLARPE…DVARELGKNL (85 aa)) folds into the Death domain. Asparagine 78 carries N-linked (GlcNAc...) asparagine glycosylation. The helical transmembrane segment at 219-239 (LALGLLTGFVGALGTGALVVL) threads the bilayer. At 240–317 (LTLWITGGDG…SWGSGALDGL (78 aa)) the chain is on the cytoplasmic side.

The protein resides in the membrane. The chain is Transmembrane and death domain protein 1 from Homo sapiens (Human).